Reading from the N-terminus, the 85-residue chain is Glutaredoxin (85 aa).

A Glutaredoxin domain is found at 1-85 (MQTVTMYTGP…EGGLDGLLNP (85 aa)). C12 and C15 form a disulfide bridge.

This sequence belongs to the glutaredoxin family. As to quaternary structure, monomer.

The protein resides in the cytoplasm. Its function is as follows. Has a glutathione-disulfide oxidoreductase activity in the presence of NADPH and glutathione reductase. Reduces low molecular weight disulfides and proteins. The polypeptide is Glutaredoxin (grx) (Neisseria meningitidis serogroup B (strain ATCC BAA-335 / MC58)).